The primary structure comprises 2724 residues: MLNMVDQKKGINNGSSTGVINNINGKIKNEFIFMYLIAAGGFSCVYKIKKKKSNKFYALKKIKFSANESNYEKKVLLNLREIECLRKLKNHPNIVSMNDFWLEVVQTLSKSKRERRGRRKEQQREQMGDKRREKRQQQRREKRKEQNTNTKKRVLITLSDHKKKKLKHLSCPENALNISNITNNERNVLKKDNWKNLILLKNFKKEKHNYNFNHQIELNKYNIMCLWKILNQMCVCKNEKKNIESLLPEQLIKNFKNFLFEKYILAIYDDCSYLNNKNNKTFIFFNNNLGNILHYLWWSYLGKNGKEKKNDIFKLLKYVSDNIIKDNTNLYNIILEFRHSLIELSRFPSNELGNVILNMRIPPNGSCELSEYISNMAKINKLEIYRNKNTLEKFIFKINCNNFDVYKMWINFKNDIIYEGKDVYKEHRKINLKRKIIKKKDIWIKGKKEKHLKNTIGNKCIKKINIYYEKPIHVFVYKSLTYKRQKHHKLWRKHYNNKKNWKYCLNKHENSKKYILFSKICRLMKTQMNKFKREEKFEKKKKIAITNIKVNYNDFEQDISSFNIQIYNKKNKNQLINRIKEQYEQLSISLNPYKLTYENENILRYNEHNYLFGLKNDNEKENIYNAIYFLNFYIWIRREINEYAIISKKRQICQNSRNYQSKKKFYIKRHNQKTYFFENIIFYHYIIMLFLDIEKYKNKFVSLFQYNLYRKLLKISKRIVLMLHRIETNVICIFLLKHFEDYFIRKGIHIVQDKSDRSNKGDEIGIHKMVKIWKSMIAISLIFGKKMYKKKKNIFNFFIELFLNNIQINIFKKFEILYLIIYFYNYFEKSKQFDIEGIGDIIYVWLSLINLFYDDKGKCIKILSKIFAKLNKKLYYVYWGKLYIIMNWTTIVDTIFIRNVLSINREGNYYWVIIVLKMINYFVNVAYTLTRMDIFFIKVMIKFYTRIGSAAATNSVSKNSYNEIFNNIFTLNFMNYIIYNSYFENEKKNYDIYTKYAILFIYCFIIQAYYFDTLFNIRSLESNEIANNLFPGYNYSYKNILLFYERLGRVIKNSNNTKICKYMWRKFINMWSNSIVIKENIISCLTTSRHIYFNILMNFMKIYCLDNILHIKKKKKKMNTPIVLTSKNDLKKWKDCELTKNPKSVKKGILIKKKNRNNNKKYKKKLKETHFIYNIKKVLFKKLVNINIETILYEQNGQCYILVFGSVIKKKNGQIKVKDTKIVRDINIIRDYRIYFYNYLEYFYKNNAHISDNINLIYARKWPYNNKNAVKQFCPYFDKIKDGNRKDIVSLYGNKILVKQNFSKIGNKIKNKKNNLCKKKMRTQKSIYNSNYWREKKENKLLNGNVNIIKKYKSEKIKKKELENFFDNIVYSSENDDFKIIFENATNSNACSTVDLASPNELNTKRNNINKKLKFFKHKKNSKKQKNYKNHKSHKKIFFKSVNNANRFFVTNVEPNPIMSNNHQIADSNDIYNNFSIQKKYEYNHKNCGNIYNTKDCDENDSSYICFLINEHEGQVLSHRHKELYKNMLGMERGNILYRDNACKLKDDFSCLHDQCDNSMIKACGTNELIKESTKIKRENMDKINKMNEVNQHISLETLKYKCSFKKIDKNLIQNKKKIIIRKICQINKTFYFKYNKINDKKRIYFDSVLCKSERHKTYKKRNENIKVILLKTLKGESNEYVLTTYLTEIYSDNINDPFENSRKKINSNEIFYQKTFDMYCIEDEGEVYEEQKRVNKNNKKKKYINEMIKMDTIRTDFEDNFTNSYNKKCNILKMASNINNKNNSGKKERDIKRQFLITNKKKHENNIKIFYNLFKLEESNVNSNPQTNPYYETVIHDNEDNIFYCLYKYIQQQVYRYCNCDIDEYTSNCIDKNVNKWEWYGFIKENENYDKIKTEINSNSFYNCREKHNICNSYNSVYQLEFRKLGNASKEKNFEEKKKIIKIEFRKSFNNFKLPSLLCILKWDNFFKPHFIIRCDNFLHTYNIYFDFFILLMNLFHKGEGSNLYRFNSNKSIIYNPYLSHQIYMVTKYFISNVHKINNKLPIHLENDILEIYSYNRFLTIPNKCSFKNCGNDNNNYDQRSKKHYFTKCGILNTEKVKPSKKRRIGWDGQRQRKRKDIINTLNEENQNMFCKNKEKKEENYKKIDTNISQFSEKNPVSNIDNEKNKQNFIKNKKYKFNLYIRMEYCKDTIENYINRRTRINIKRNIEIINMIIMGLNYIHNNNIMHRDLKPSNIFISNNDIVKIGDFGLASYDYLDDHKINTTKEEEIQKDLIINKNCDKIFFCNKKKLFSNYNSVFPLENGQISDVHNTKGDYNESSISKSKKFAIQNKNRNLRSCKRIFQWWSTIGELNILSKNRRRLTKFKSGSNTIHIRKSTLDENIIVRHANKCHNLSFSQNREHIDRNRMKKCNIIKNHIIKSNKSEKMNISMNVFLRCTKTRRYFTDEDKSVETRKKCSKTSEEENGNICDTKKKKNDIGEKMDKNKIAAQKKKKKKENKHPIGRRSTNSSISSAIVVKRNAYCRLEIEKYFLSKSFQNCRSNKKKKYINIKTIKNKFCSASNKNFGAKWMRIYRKGLHHDDIQEKSADQTTEQMGGCNKTVASDFSSNLKNKKESINHTLGIGTKLYSAPEQLEGNKYTKSVDIFSLGLIIIDLFIKTETNMERTQILCNARERILPDLLIKKHPNVASLCKKMLSLDYKSRPTSAQLYNKIISAGDIFLPDKCP.

Residues Met-1–Asn-24 lie on the Cytoplasmic side of the membrane. The helical transmembrane segment at Gly-25–Val-45 threads the bilayer. The Extracellular segment spans residues Tyr-46–Lys-673. The disordered stretch occupies residues Lys-112–Arg-153. The segment covering Lys-120–Gln-146 has biased composition (basic and acidic residues). Residues Thr-674–Glu-694 traverse the membrane as a helical segment. At Lys-695–Arg-718 the chain is on the cytoplasmic side. A helical transmembrane segment spans residues Ile-719–Phe-739. Topologically, residues Glu-740–Glu-800 are extracellular. The helical transmembrane segment at Leu-801–Ile-821 threads the bilayer. Topologically, residues Tyr-822–Gln-832 are cytoplasmic. The chain crosses the membrane as a helical span at residues Phe-833–Tyr-853. Over Asp-854 to Tyr-876 the chain is Extracellular. Residues Val-877–Ile-897 traverse the membrane as a helical segment. Topologically, residues Arg-898–Asn-908 are cytoplasmic. A helical transmembrane segment spans residues Tyr-909–Leu-929. Topologically, residues Thr-930–Tyr-996 are extracellular. Residues Ala-997–Ile-1017 form a helical membrane-spanning segment. Over Arg-1018–Pro-2724 the chain is Cytoplasmic. Lys-2029 serves as a coordination point for ATP. The Protein kinase domain maps to Lys-2084–Leu-2719. Positions Ile-2120 to Lys-2155 form a coiled coil. Residue Asp-2229 is the Proton acceptor of the active site. The interval Glu-2479 to Asn-2507 is disordered. Residues Ala-2488–Gly-2502 show a composition bias toward basic residues.

This sequence belongs to the protein kinase superfamily. Ser/Thr protein kinase family. GCN2 subfamily. Auto-phosphorylated.

The protein localises to the membrane. The catalysed reaction is L-seryl-[protein] + ATP = O-phospho-L-seryl-[protein] + ADP + H(+). The enzyme catalyses L-threonyl-[protein] + ATP = O-phospho-L-threonyl-[protein] + ADP + H(+). In terms of biological role, phosphorylates translation factor eIF2alpha in salivary gland sporozoites during dormancy, which leads to an inhibition of protein translation and accumulation of stalled mRNAs into granules. This is Eukaryotic translation initiation factor 2-alpha kinase 2 from Plasmodium berghei (strain Anka).